An 874-amino-acid polypeptide reads, in one-letter code: Alanine--tRNA ligase (874 aa).

Zn(2+) contacts are provided by H562, H566, C664, and H668.

Belongs to the class-II aminoacyl-tRNA synthetase family. Requires Zn(2+) as cofactor.

Its subcellular location is the cytoplasm. It catalyses the reaction tRNA(Ala) + L-alanine + ATP = L-alanyl-tRNA(Ala) + AMP + diphosphate. Its function is as follows. Catalyzes the attachment of alanine to tRNA(Ala) in a two-step reaction: alanine is first activated by ATP to form Ala-AMP and then transferred to the acceptor end of tRNA(Ala). Also edits incorrectly charged Ser-tRNA(Ala) and Gly-tRNA(Ala) via its editing domain. The sequence is that of Alanine--tRNA ligase from Shewanella halifaxensis (strain HAW-EB4).